The following is a 159-amino-acid chain: Ribosomal RNA large subunit methyltransferase H (159 aa).

Residues L76, G108, and 127-132 each bind S-adenosyl-L-methionine; that span reads FGRLTL.

Belongs to the RNA methyltransferase RlmH family. Homodimer.

It is found in the cytoplasm. The enzyme catalyses pseudouridine(1915) in 23S rRNA + S-adenosyl-L-methionine = N(3)-methylpseudouridine(1915) in 23S rRNA + S-adenosyl-L-homocysteine + H(+). In terms of biological role, specifically methylates the pseudouridine at position 1915 (m3Psi1915) in 23S rRNA. The chain is Ribosomal RNA large subunit methyltransferase H from Listeria monocytogenes serotype 4b (strain CLIP80459).